The sequence spans 370 residues: 3,7-dimethylxanthine N-methyltransferase CkTbS (370 aa).

Y24 provides a ligand contact to S-adenosyl-L-homocysteine. Residue T31 coordinates theobromine. Positions 67, 72, 104, 105, 139, and 140 each coordinate S-adenosyl-L-homocysteine. Residues Y157, H160, and W161 each coordinate theobromine. N178 is a Mg(2+) binding site. Position 226 (H226) interacts with theobromine. 3 residues coordinate Mg(2+): D264, F266, and N267. F322 is a binding site for theobromine.

The protein belongs to the methyltransferase superfamily. Type-7 methyltransferase family. Mg(2+) is required as a cofactor.

The enzyme catalyses 7-methylxanthine + S-adenosyl-L-methionine = theobromine + S-adenosyl-L-homocysteine + H(+). The protein operates within alkaloid biosynthesis. Its function is as follows. Involved in the biosynthesis of caffeine in cv. Puer. Involved in the biosynthesis of theacrine in cv. Kucha, a caffeine-like xanthine alkaloid with diverse beneficial biological activities including anti-depressive, sedative, and hypnotic activities, improving learning and memory, increasing exercise activity, and preventing nonalcoholic fatty liver disease. Catalyzes the conversion of 7-methylxanthine (7mX) to theobromine but not able to convert paraxanthine to caffeine. The protein is 3,7-dimethylxanthine N-methyltransferase CkTbS of Camellia sinensis var. assamica (Assam tea).